We begin with the raw amino-acid sequence, 182 residues long: Ribulose bisphosphate carboxylase small subunit, chloroplastic 3 (182 aa).

Residues 1-41 (MASIMMNKSVVLSKECAKPLASPKVTLNKRGFATTIATKNR) constitute a chloroplast transit peptide.

This sequence belongs to the RuBisCO small chain family. Heterohexadecamer of 8 large and 8 small subunits.

The protein resides in the plastid. It localises to the chloroplast. Functionally, ruBisCO catalyzes two reactions: the carboxylation of D-ribulose 1,5-bisphosphate, the primary event in carbon dioxide fixation, as well as the oxidative fragmentation of the pentose substrate. Both reactions occur simultaneously and in competition at the same active site. Although the small subunit is not catalytic it is essential for maximal activity. In Acetabularia acetabulum (Mermaid's wine glass), this protein is Ribulose bisphosphate carboxylase small subunit, chloroplastic 3.